The primary structure comprises 345 residues: Phosphate acyltransferase (345 aa).

It belongs to the PlsX family. In terms of assembly, homodimer. Probably interacts with PlsY.

The protein localises to the cytoplasm. The enzyme catalyses a fatty acyl-[ACP] + phosphate = an acyl phosphate + holo-[ACP]. It participates in lipid metabolism; phospholipid metabolism. In terms of biological role, catalyzes the reversible formation of acyl-phosphate (acyl-PO(4)) from acyl-[acyl-carrier-protein] (acyl-ACP). This enzyme utilizes acyl-ACP as fatty acyl donor, but not acyl-CoA. The protein is Phosphate acyltransferase of Trichlorobacter lovleyi (strain ATCC BAA-1151 / DSM 17278 / SZ) (Geobacter lovleyi).